The primary structure comprises 131 residues: Small ribosomal subunit protein uS8 (131 aa).

This sequence belongs to the universal ribosomal protein uS8 family. As to quaternary structure, part of the 30S ribosomal subunit. Contacts proteins S5 and S12.

In terms of biological role, one of the primary rRNA binding proteins, it binds directly to 16S rRNA central domain where it helps coordinate assembly of the platform of the 30S subunit. The protein is Small ribosomal subunit protein uS8 of Dehalococcoides mccartyi (strain CBDB1).